Consider the following 190-residue polypeptide: MEVILLERVAKLGQMGETVNVRPGFARNFLLARGKALRATEANKKHFEAQRAQLEARNLDRKKDAEVVAEKLNGQSFILIRQSGETGVLYGSVSTRDLAEVVSKEGFTVDRGQFTLNQPIKTLGLHTVPVVLHPEVEVEITVNVARSPEEAERQARGESVTEREAFNLDDLGLEVGQALADAGEGADDRG.

The protein belongs to the bacterial ribosomal protein bL9 family.

Functionally, binds to the 23S rRNA. The sequence is that of Large ribosomal subunit protein bL9 from Methylobacterium radiotolerans (strain ATCC 27329 / DSM 1819 / JCM 2831 / NBRC 15690 / NCIMB 10815 / 0-1).